The chain runs to 307 residues: Ras-related protein Rab-33 (307 aa).

The disordered stretch occupies residues 19–80 (VIDPPKHVTA…IPPAPEAVTA (62 aa)). Pro residues-rich tracts occupy residues 42 to 56 (PTHP…PAVP) and 65 to 75 (PTAPPPIPPAP). Residue 107-114 (GNAAVGKT) participates in GTP binding. The short motif at 129 to 137 (TEATIGVDF) is the Effector region element. GTP is bound by residues 155–159 (DTAGQ) and 217–220 (NKCD). Residues Cys-306 and Cys-307 are each lipidated (S-geranylgeranyl cysteine).

The protein belongs to the small GTPase superfamily. Rab family.

The protein localises to the cell membrane. In Caenorhabditis elegans, this protein is Ras-related protein Rab-33 (rab-33).